A 533-amino-acid chain; its full sequence is Neuropilin and tolloid-like protein 1 (533 aa).

The N-terminal stretch at 1–22 (MIYGRSLFHIIASLIILHSSGA) is a signal peptide. Over 23-344 (TKKGTEKQIT…LDQLTNTSGT (322 aa)) the chain is Extracellular. 7 cysteine pairs are disulfide-bonded: Cys-41-Cys-68, Cys-96-Cys-118, Cys-172-Cys-202, Cys-229-Cys-251, Cys-292-Cys-304, Cys-299-Cys-317, and Cys-311-Cys-326. CUB domains follow at residues 41 to 155 (CGTW…YNFT) and 172 to 287 (CEFE…FTSF). Residues 291 to 327 (PCEGNTFFCHSNMCINNTLVCNGLQNCVYPWDENHCK) enclose the LDL-receptor class A domain. Residue Asn-306 is glycosylated (N-linked (GlcNAc...) asparagine). Asn-340 carries an N-linked (GlcNAc...) asparagine glycan. Residues 345–365 (VIGVTSCIVIILIIVSVIVQI) form a helical membrane-spanning segment. The Cytoplasmic segment spans residues 366–533 (KQPRKKYVQR…HESEYNTTRV (168 aa)). Tyr-417 is modified (phosphotyrosine). A PDZ-binding motif is present at residues 531 to 533 (TRV).

As to quaternary structure, interacts with PLZ domains of DLG2, DLG3 and DLG4 via its C-terminal TRV domain. Interacts with GRIN2A and GRIN2B via its CUB domains. As to expression, expressed only in brain. Present throughout the central nervous system. Highly expressed in the hippocampal CA3 region, olfactory bulb and tubercle, caudate putamen, and neocortex in the adult brain.

It is found in the membrane. The protein resides in the postsynaptic density membrane. In terms of biological role, involved in the development and/or maintenance of neuronal circuitry. Accessory subunit of the neuronal N-methyl-D-aspartate receptor (NMDAR) critical for maintaining the abundance of GRIN2A-containing NMDARs in the postsynaptic density. Regulates long-term NMDA receptor-dependent synaptic plasticity and cognition, at least in the context of spatial learning and memory. This chain is Neuropilin and tolloid-like protein 1 (Neto1), found in Mus musculus (Mouse).